The primary structure comprises 874 residues: MTDLSKHTPMMQQYLKIKGEHPNEMVFYRMGDFYELFYDDAKKAAELLDITLTARGQSGGNPIPMAGVPFHSAEGYIARMVRAGQSIAICEQIGDPATSKGPVERKVVRIVTPGTLSDEAFLEDRRDNLLAAIYHHKEQFGFASLDISSGRFAVSELESLEALQGELQRLRPAEILISEDFPYTDILEGFTGVRRQGPWLFESDTALRVITQQLQVRDLTGFGCEDLTLAVCAAGCLLQYAKETQRTALPHIRKLTRERREDAVILDAASRRNLEIDTNLMGGQQHTLAWVMDRTATAMGARELRRWLNRPLRDVERVRQRQQAVSALLDGFHYEPVHDLLKRVGDIERILARVALRSARPRDLARLRDAFHALPELQEALKPVNSHHVVKLATVIGEYPELADLLERAIIDNPPVVIRDGGVIAEGFDEELDELRNISENAGQYLLDVETRERERTGISTLKVGYNRVHGYYIEISRAQSDQAPVDYIRRQTLKNAERFITPELKEFEDKALSAKSRALAREKGLYDDVLETVAEQLAPLQDAAQALAELDVLSNFAERATSLRFTAPEFTDQPGFDVEEGRHPVVEQLLDEPFVPNNLLMDTKRRMLVITGPNMGGKSTYMRQAALIALLAYTGSFVPANRAVLGPVDRIFTRMGSSDDIAGGRSTFMVEMTETANILHNATEHSLVLMDEVGRGTSTFDGLSLAWATAEHLAKNIRCYTLFATHYFELTQLADDLEHAVNVHLTATEHDDSIVFLHNVHDGPASQSYGLQVAKLAGVPQDVIRNAKTQLAHLEGLEAGSTPSPAPVSVNEPKPAAPTATKAASVEAVYQGDMFAMAEPSVVEQALEKLDLDGITPRDALNQLYELKGLLAK.

Position 613 to 620 (Gly-613 to Ser-620) interacts with ATP. The disordered stretch occupies residues Glu-799–Thr-820.

It belongs to the DNA mismatch repair MutS family.

In terms of biological role, this protein is involved in the repair of mismatches in DNA. It is possible that it carries out the mismatch recognition step. This protein has a weak ATPase activity. This Marinobacter nauticus (strain ATCC 700491 / DSM 11845 / VT8) (Marinobacter aquaeolei) protein is DNA mismatch repair protein MutS.